A 292-amino-acid polypeptide reads, in one-letter code: Shikimate dehydrogenase (NADP(+)) (292 aa).

Shikimate contacts are provided by residues 22–24 (SLS) and Ser69. The Proton acceptor role is filled by Lys73. Shikimate-binding residues include Asn94 and Asp111. Residues 135 to 139 (GVGGA) and Ile236 contribute to the NADP(+) site. Tyr238 is a shikimate binding site. Position 260 (Gly260) interacts with NADP(+).

It belongs to the shikimate dehydrogenase family. Homodimer.

It carries out the reaction shikimate + NADP(+) = 3-dehydroshikimate + NADPH + H(+). Its pathway is metabolic intermediate biosynthesis; chorismate biosynthesis; chorismate from D-erythrose 4-phosphate and phosphoenolpyruvate: step 4/7. Its function is as follows. Involved in the biosynthesis of the chorismate, which leads to the biosynthesis of aromatic amino acids. Catalyzes the reversible NADPH linked reduction of 3-dehydroshikimate (DHSA) to yield shikimate (SA). This Streptococcus pyogenes serotype M18 (strain MGAS8232) protein is Shikimate dehydrogenase (NADP(+)).